Here is a 314-residue protein sequence, read N- to C-terminus: Malate dehydrogenase (314 aa).

Residues 11-16 (GSGNIG) and D35 contribute to the NAD(+) site. Residues R84 and R90 each coordinate substrate. NAD(+) contacts are provided by residues N97 and 120-122 (ITN). Residues N122 and R153 each contribute to the substrate site. H177 acts as the Proton acceptor in catalysis.

The protein belongs to the LDH/MDH superfamily. MDH type 3 family.

It catalyses the reaction (S)-malate + NAD(+) = oxaloacetate + NADH + H(+). Functionally, catalyzes the reversible oxidation of malate to oxaloacetate. The chain is Malate dehydrogenase from Rickettsia prowazekii (strain Madrid E).